The sequence spans 96 residues: Secretoglobin family 2B member 2 (96 aa).

Positions 1–23 are cleaved as a signal peptide; it reads MRVTSATCALLLALICSVQLGDA.

Belongs to the secretoglobin family.

It is found in the secreted. The protein is Secretoglobin family 2B member 2 (SCGB2B2) of Homo sapiens (Human).